Here is a 147-residue protein sequence, read N- to C-terminus: Protein phosphatase 1 regulatory subunit 14B (147 aa).

Residues 1–15 (MADSGPAGGAALAAP) show a composition bias toward low complexity. The disordered stretch occupies residues 1–55 (MADSGPAGGAALAAPAPGPGSGGAGPRVYFQSPPGAAGEGPGGADDEGPVRRQGK). Ala2 carries the post-translational modification N-acetylalanine. Ser21 is modified (phosphoserine). Tyr29 is modified (phosphotyrosine). The residue at position 32 (Ser32) is a Phosphoserine. Thr57 is modified (phosphothreonine). The stretch at 61–103 (DRKELRKRLNLEEWILEQLTRLYDCQEEEIPELEIDVDELLDM) forms a coiled coil.

It belongs to the PP1 inhibitor family. In terms of processing, phosphorylated primarily on Thr-57 by PKC (in vitro). An unknown Ser is also phosphorylated by PKC (in vitro).

The protein localises to the cytoplasm. In terms of biological role, inhibitor of PPP1CA. Has over 50-fold higher inhibitory activity when phosphorylated. The protein is Protein phosphatase 1 regulatory subunit 14B (PPP1R14B) of Sus scrofa (Pig).